We begin with the raw amino-acid sequence, 918 residues long: UPF0182 protein CPR_0011 (918 aa).

A run of 7 helical transmembrane segments spans residues 8–28 (TVLI…NFII), 46–66 (LIAI…VIAI), 91–111 (FLLS…TTQW), 151–171 (AISL…ALGF), 200–220 (LAVL…LKSY), 243–263 (IFYK…FISI), and 271–291 (IIIS…VAIF).

The protein belongs to the UPF0182 family.

Its subcellular location is the cell membrane. This Clostridium perfringens (strain SM101 / Type A) protein is UPF0182 protein CPR_0011.